A 396-amino-acid chain; its full sequence is S-adenosylmethionine synthase (396 aa).

Histidine 16 provides a ligand contact to ATP. Aspartate 18 is a Mg(2+) binding site. Position 44 (glutamate 44) interacts with K(+). L-methionine contacts are provided by glutamate 57 and glutamine 100. The flexible loop stretch occupies residues 100 to 110 (QSPDIAQGVNE). ATP is bound by residues 175 to 177 (DAK), 242 to 243 (RF), aspartate 251, 257 to 258 (RK), alanine 274, and lysine 278. Aspartate 251 contributes to the L-methionine binding site. Lysine 282 serves as a coordination point for L-methionine.

Belongs to the AdoMet synthase family. As to quaternary structure, homotetramer; dimer of dimers. The cofactor is Mg(2+). K(+) serves as cofactor.

It is found in the cytoplasm. It carries out the reaction L-methionine + ATP + H2O = S-adenosyl-L-methionine + phosphate + diphosphate. Its pathway is amino-acid biosynthesis; S-adenosyl-L-methionine biosynthesis; S-adenosyl-L-methionine from L-methionine: step 1/1. In terms of biological role, catalyzes the formation of S-adenosylmethionine (AdoMet) from methionine and ATP. The overall synthetic reaction is composed of two sequential steps, AdoMet formation and the subsequent tripolyphosphate hydrolysis which occurs prior to release of AdoMet from the enzyme. This is S-adenosylmethionine synthase from Streptococcus suis (strain 05ZYH33).